Here is a 596-residue protein sequence, read N- to C-terminus: MKQIRNFSIIAHIDHGKSTLSDRLIQVCGGLTDREMDAQVLDSMDLERERGITIKAQSVTLDYKAKDGLVYQLNFIDTPGHVDFSYEVSRSLAACEGALLVVDAGQGVEAQTLANCYTALDMNLDVVPILNKIDLPQADPERVAAEIEDIVGIDAMDAVRCSAKTGVGVDEVLEVIVAKIPPPEGDPNAPLQALIIDSWFDNYLGVVSLVRIKHGSLKKGDKFKVMSTGQNHTADRVGIFTPKQTDKTELKTGEVGFVIAGLKEIHGAPVGDTLTLAKNGAEKPLPGFKKVKPQVYAGVFPISTDEYENFRDALNKLSLNDASLFFEPESSSALGFGFRIGYLGLLHMEIVQERLEREYNLELITTAPTVVYEVVMTSGETIYVDNPSDLPAINNIEEMREPIVEANILVPKEYLGNVITLCIEKRGTQVNMVYHGNQVAVTYHLPMAEVVMDFFDRLKSTSRGYASLEYNFIRFDPADMVRLDILINGDRVDALAMVIHRSNIRHRGLALVDKMKELIPRQMFDIAIQAAVGSQIIARSTVKALRKDVTAKCYGGDVSRKKKLLNKQKEGKKRMKQVGNVEVPQEAFLAVLKLNE.

Positions 2–184 (KQIRNFSIIA…VIVAKIPPPE (183 aa)) constitute a tr-type G domain. GTP-binding positions include 14 to 19 (DHGKST) and 131 to 134 (NKID).

This sequence belongs to the TRAFAC class translation factor GTPase superfamily. Classic translation factor GTPase family. LepA subfamily.

The protein localises to the cell inner membrane. The catalysed reaction is GTP + H2O = GDP + phosphate + H(+). Required for accurate and efficient protein synthesis under certain stress conditions. May act as a fidelity factor of the translation reaction, by catalyzing a one-codon backward translocation of tRNAs on improperly translocated ribosomes. Back-translocation proceeds from a post-translocation (POST) complex to a pre-translocation (PRE) complex, thus giving elongation factor G a second chance to translocate the tRNAs correctly. Binds to ribosomes in a GTP-dependent manner. This chain is Elongation factor 4, found in Shewanella baltica (strain OS155 / ATCC BAA-1091).